We begin with the raw amino-acid sequence, 99 residues long: Large ribosomal subunit protein eL21 (99 aa).

Belongs to the eukaryotic ribosomal protein eL21 family.

This chain is Large ribosomal subunit protein eL21, found in Methanocella arvoryzae (strain DSM 22066 / NBRC 105507 / MRE50).